The following is a 242-amino-acid chain: Ribose-5-phosphate isomerase A (242 aa).

Residues 39–42 (SGST), 95–98 (DGAD), and 108–111 (KGGG) each bind substrate. Glutamate 117 serves as the catalytic Proton acceptor. A substrate-binding site is contributed by lysine 135.

The protein belongs to the ribose 5-phosphate isomerase family. In terms of assembly, homodimer.

The enzyme catalyses aldehydo-D-ribose 5-phosphate = D-ribulose 5-phosphate. It participates in carbohydrate degradation; pentose phosphate pathway; D-ribose 5-phosphate from D-ribulose 5-phosphate (non-oxidative stage): step 1/1. Functionally, catalyzes the reversible conversion of ribose-5-phosphate to ribulose 5-phosphate. This chain is Ribose-5-phosphate isomerase A, found in Chlamydia trachomatis serovar D (strain ATCC VR-885 / DSM 19411 / UW-3/Cx).